Consider the following 457-residue polypeptide: Carboxypeptidase N catalytic chain (457 aa).

The signal sequence occupies residues 1-23; it reads MPDLPSAFLPLLLLSKFVTPVTF. The region spanning 24-338 is the Peptidase M14 domain; sequence RHHRYDDLVR…EALIQFLEQV (315 aa). An intrachain disulfide couples C42 to C104. Residues H86, E89, and H216 each coordinate Zn(2+). C271 and C311 are joined by a disulfide. E308 acts as the Proton donor/acceptor in catalysis. T400, T402, and T409 each carry an O-linked (GalNAc...) threonine glycan. The interval 418-457 is disordered; the sequence is STTQVHPVQKAPGRGQGSRAKQPRTSRKKDQAAKRHRGPA.

Belongs to the peptidase M14 family. Tetramer of two catalytic chains and two glycosylated inactive chains. Zn(2+) is required as a cofactor. In terms of tissue distribution, plasma. Expressed in liver.

It is found in the secreted. It localises to the extracellular space. It carries out the reaction Release of a C-terminal basic amino acid, preferentially lysine.. Its function is as follows. Protects the body from potent vasoactive and inflammatory peptides containing C-terminal Arg or Lys (such as kinins or anaphylatoxins) which are released into the circulation. The chain is Carboxypeptidase N catalytic chain (Cpn1) from Rattus norvegicus (Rat).